A 103-amino-acid chain; its full sequence is Iron-sulfur cluster assembly protein CyaY (103 aa).

Belongs to the frataxin family.

Its function is as follows. Involved in iron-sulfur (Fe-S) cluster assembly. May act as a regulator of Fe-S biogenesis. This is Iron-sulfur cluster assembly protein CyaY from Rickettsia africae (strain ESF-5).